Here is a 248-residue protein sequence, read N- to C-terminus: 2,3-bisphosphoglycerate-dependent phosphoglycerate mutase (248 aa).

Residues 8 to 15 (RHGESGWN) and arginine 58 each bind substrate. Histidine 9 functions as the Tele-phosphohistidine intermediate in the catalytic mechanism. Residues 82–101 (GTGEDRTEREDGSRKDRKEK) form a disordered region. Catalysis depends on glutamate 124, which acts as the Proton donor/acceptor. Residues 124–127 (ERYY) and lysine 135 each bind substrate.

The protein belongs to the phosphoglycerate mutase family. BPG-dependent PGAM subfamily.

It carries out the reaction (2R)-2-phosphoglycerate = (2R)-3-phosphoglycerate. It functions in the pathway carbohydrate degradation; glycolysis; pyruvate from D-glyceraldehyde 3-phosphate: step 3/5. Its function is as follows. Catalyzes the interconversion of 2-phosphoglycerate and 3-phosphoglycerate. The protein is 2,3-bisphosphoglycerate-dependent phosphoglycerate mutase of Methanosarcina acetivorans (strain ATCC 35395 / DSM 2834 / JCM 12185 / C2A).